We begin with the raw amino-acid sequence, 357 residues long: Heat-inducible transcription repressor HrcA (357 aa).

Belongs to the HrcA family.

In terms of biological role, negative regulator of class I heat shock genes (grpE-dnaK-dnaJ and groELS operons). Prevents heat-shock induction of these operons. In Chlorobium limicola (strain DSM 245 / NBRC 103803 / 6330), this protein is Heat-inducible transcription repressor HrcA.